The primary structure comprises 618 residues: Sphingomyelin phosphodiesterase 2 (618 aa).

Residues 1 to 22 (MQQPLIILGIGIVLALVSNVES) form the signal peptide. One can recognise a Saposin B-type domain in the interval 68-151 (RKMSCLFCTF…AFIANCGHSD (84 aa)). Cystine bridges form between C72/C147, C75/C140, and C103/C114. N89 carries N-linked (GlcNAc...) asparagine glycosylation. N159 carries an N-linked (GlcNAc...) asparagine glycan. Residues D189 and H191 each coordinate Zn(2+). Intrachain disulfides connect C204/C216 and C217/C249. D278 contacts Zn(2+). N298 carries N-linked (GlcNAc...) asparagine glycosylation. N318, H427, H461, and H463 together coordinate Zn(2+). C387 and C435 form a disulfide bridge. N-linked (GlcNAc...) asparagine glycans are attached at residues N525 and N568. 2 disulfides stabilise this stretch: C588/C594 and C600/C613.

It belongs to the acid sphingomyelinase family. Requires Zn(2+) as cofactor.

It is found in the secreted. The catalysed reaction is a sphingomyelin + H2O = phosphocholine + an N-acylsphing-4-enine + H(+). It carries out the reaction an N-acyl-15-methylhexadecasphing-4-enine-1-phosphocholine + H2O = an N-acyl-15-methylhexadecasphing-4-enine + phosphocholine + H(+). Its pathway is lipid metabolism; sphingolipid metabolism. Functionally, sphingomyelin phosphodiesterase (sphingomyelinase) that converts sphingomyelin (N-acyl-sphingoid-1-phosphocholine) to ceramide (N-acyl-sphingoid base) and phosphocholine at acidic pH. Displays its enzymatic activity when secreted. May play distinct roles in signaling. The polypeptide is Sphingomyelin phosphodiesterase 2 (asm-2) (Caenorhabditis elegans).